A 182-amino-acid polypeptide reads, in one-letter code: P21 prophage-derived terminase small subunit (182 aa).

An ATP-binding site is contributed by 31-36 (SKGSKG).

The protein belongs to the terminase small subunit family. In terms of assembly, heterooligomer of gp1 and gp2.

Its function is as follows. Involved in the initiation of the phage DNA packaging into the prohead. Processes replicating concatemeric DNA into pieces of unit length with cohesive ends. This is P21 prophage-derived terminase small subunit (nohA) from Escherichia coli O6:H1 (strain CFT073 / ATCC 700928 / UPEC).